Consider the following 482-residue polypeptide: Glutamate--tRNA ligase 1 (482 aa).

Positions 18-28 (PSPTGYLHLGG) match the 'HIGH' region motif. The 'KMSKS' region motif lies at 252–256 (KLSKR). K255 contacts ATP.

This sequence belongs to the class-I aminoacyl-tRNA synthetase family. Glutamate--tRNA ligase type 1 subfamily. Monomer.

The protein resides in the cytoplasm. It carries out the reaction tRNA(Glu) + L-glutamate + ATP = L-glutamyl-tRNA(Glu) + AMP + diphosphate. Its function is as follows. Catalyzes the attachment of glutamate to tRNA(Glu) in a two-step reaction: glutamate is first activated by ATP to form Glu-AMP and then transferred to the acceptor end of tRNA(Glu). This is Glutamate--tRNA ligase 1 from Erythrobacter litoralis (strain HTCC2594).